The chain runs to 730 residues: Cyclin-dependent kinase 12 (730 aa).

2 disordered regions span residues 1 to 230 and 246 to 283; these read MEIS…APFS and FSLS…IATR. Basic and acidic residues predominate over residues 9–21; it reads THERDRKGSYGHR. Over residues 57 to 67 the composition is skewed to polar residues; sequence SISPQYKQRNW. The segment covering 75-94 has biased composition (basic and acidic residues); that stretch reads GRDRGRNDFSYRKKGKDYNK. 2 stretches are compositionally biased toward basic residues: residues 95–122 and 151–163; these read RRDK…KRRN and KSKK…RKHS. Residues 194–203 show a composition bias toward low complexity; that stretch reads FNINPFQPMF. Positions 204 to 230 are enriched in pro residues; it reads SQPPPPPLPPNSQFMTPPPRPPPAPFS. One can recognise a Protein kinase domain in the interval 313–605; it reads MLDQIGEGTY…AKEALNHPWI (293 aa). ATP-binding positions include 317-325, Lys-340, and 398-403; these read IGEGTYGQV and EYVDHD. Asp-444 serves as the catalytic Proton acceptor. The segment at 623-730 is disordered; that stretch reads DCHEMWSKKQ…QSQYQSVFFK (108 aa). Residue His-625 participates in ATP binding. A compositionally biased stretch (basic residues) spans 676 to 688; it reads NHHHHHHHSHHHA. Over residues 714–730 the composition is skewed to polar residues; the sequence is NNHQPVPQSQYQSVFFK.

It belongs to the protein kinase superfamily. CMGC Ser/Thr protein kinase family. CDC2/CDKX subfamily.

It localises to the nucleus. The enzyme catalyses [DNA-directed RNA polymerase] + ATP = phospho-[DNA-directed RNA polymerase] + ADP + H(+). The catalysed reaction is L-seryl-[protein] + ATP = O-phospho-L-seryl-[protein] + ADP + H(+). It catalyses the reaction L-threonyl-[protein] + ATP = O-phospho-L-threonyl-[protein] + ADP + H(+). Cyclin-dependent kinase which displays CTD kinase activity: hyperphosphorylates 'Ser-2' in the C-terminal heptapeptide repeat domain (CTD) of the largest RNA polymerase II subunit, thereby acting as a key regulator of transcription elongation. Required for normal reproduction. The polypeptide is Cyclin-dependent kinase 12 (Caenorhabditis elegans).